We begin with the raw amino-acid sequence, 131 residues long: Peptidyl-prolyl cis-trans isomerase NIMA-interacting 4 (131 aa).

The tract at residues 1 to 25 is necessary for nuclear localization and DNA-binding; sequence MPPKGKSGSGKGGKGKAASGSESSE. Positions 1 to 37 are disordered; it reads MPPKGKSGSGKGGKGKAASGSESSEKKAQGPKGGGNA. The segment at 1–41 is necessary for association with the pre-rRNP complexes; it reads MPPKGKSGSGKGGKGKAASGSESSEKKAQGPKGGGNAVKVR. Residue serine 19 is modified to Phosphoserine; by CK2. The region spanning 35-129 is the PpiC domain; sequence GNAVKVRHIL…FGYHIIMVEG (95 aa).

Belongs to the PpiC/parvulin rotamase family. PIN4 subfamily. Found in pre-ribosomal ribonucleoprotein (pre-rRNP) complexes. In terms of processing, phosphorylated. Phosphorylation occurs both in the nucleus and the cytoplasm. Phosphorylation at Ser-19 does not affect its PPIase activity but is required for nuclear localization, and the dephosphorylation is a prerequisite for the binding to DNA. The unphosphorylated form associates with the pre-rRNP complexes in the nucleus.

It localises to the nucleus. It is found in the nucleolus. Its subcellular location is the cytoplasm. The protein resides in the cytoskeleton. The protein localises to the spindle. It catalyses the reaction [protein]-peptidylproline (omega=180) = [protein]-peptidylproline (omega=0). Functionally, involved as a ribosomal RNA processing factor in ribosome biogenesis. Binds to tightly bent AT-rich stretches of double-stranded DNA. The protein is Peptidyl-prolyl cis-trans isomerase NIMA-interacting 4 (PIN4) of Bos taurus (Bovine).